The sequence spans 81 residues: CLAVATA3/ESR (CLE)-related protein 12 (81 aa).

The first 31 residues, 1–31, serve as a signal peptide directing secretion; it reads MENSNKVPISKIGLIMLMIFSTFFMSPHARR. The segment covering 55 to 67 has biased composition (basic and acidic residues); sequence KRSRTDLEDKAVP. The disordered stretch occupies residues 55–81; sequence KRSRTDLEDKAVPGDRLSPGGPNHIHN. Hydroxyproline is present on residues proline 73 and proline 76. Proline 76 carries O-linked (Ara...) hydroxyproline glycosylation.

The protein belongs to the CLV3/ESR signal peptide family. Post-translationally, the O-glycosylation (arabinosylation) of the hydroxyproline Pro-76 enhances binding affinity of the CLE12p peptide for its receptor. Expressed in young nodules throughout the central tissue. Expressed in the apical region of elongated nodules, corresponding to the meristematic and early infection zones.

The protein resides in the secreted. The protein localises to the extracellular space. Its function is as follows. Signaling peptide involved in the regulation of nodulation. Moves from root to shoot to function with the receptor kinase SUNN, in a signaling pathway that plays roles during cellular differentiation, both at the onset of nodulation, and later during nodule meristem development and subsequent homeostasis. Interacts with SUNN signaling to control nodule numbers. SUNN is involved in the autoregulation of nodulation (AON), a long distance systemic signaling from root to shoot and back again, which allows legumes to limit the number of root nodules formed based on available nitrogen and previous rhizobial colonization. The chain is CLAVATA3/ESR (CLE)-related protein 12 from Medicago truncatula (Barrel medic).